A 162-amino-acid chain; its full sequence is uncharacterized protein (162 aa).

Residues 1 to 34 (MAREVISTSILMIATVVAVTAAIMVILPAVKDLA) form the signal peptide.

This is an uncharacterized protein from Archaeoglobus fulgidus (strain ATCC 49558 / DSM 4304 / JCM 9628 / NBRC 100126 / VC-16).